The sequence spans 96 residues: Large ribosomal subunit protein eL21 (96 aa).

Residues 1–66 (MPSSNGPLEG…FDGQTGTVEG (66 aa)) are disordered.

The protein belongs to the eukaryotic ribosomal protein eL21 family. As to quaternary structure, part of the 50S ribosomal subunit. Interacts with protein L18 and binds the 5S rRNA. Has been cross-linked to L18.

Its function is as follows. This is one of 5 proteins that mediate the attachment of the 5S rRNA onto the large ribosomal subunit, stabilizing the orientation of adjacent RNA domains. This is Large ribosomal subunit protein eL21 (rpl21e) from Haloarcula marismortui (strain ATCC 43049 / DSM 3752 / JCM 8966 / VKM B-1809) (Halobacterium marismortui).